Reading from the N-terminus, the 124-residue chain is Con-Ins Tx1 (124 aa).

An N-terminal signal peptide occupies residues 1–24; the sequence is MTTSSYFLLVALGLLLYVFQSSFG. 4 disulfide bridges follow: cysteine 29-cysteine 107, cysteine 41-cysteine 110, cysteine 53-cysteine 123, and cysteine 109-cysteine 114. A 4-hydroxyproline; partial modification is found at proline 34. A propeptide spans 59–92 (c peptide); that stretch reads EQGGANNARANTGRTSSLMKRRGFLSLLKKRGKR. Glutamate 118 bears the 4-carboxyglutamate; partial mark.

The protein belongs to the insulin family. As to quaternary structure, heterodimer of A and B chains; disulfide-linked. Expressed by the venom gland.

It localises to the secreted. Functionally, this venom insulin facilitates prey capture by rapidly inducing hypoglycemic shock. Intraperitoneal injection of this peptide into zebrafish lowers blood glucose with the same potency than human insulin. In vivo, when applied to water, this peptide reduces overall locomotor activity of zebrafish larvae, observed as a significant decrease in the percentage of time spent swimming and movement frequency. In Conus textile (Cloth-of-gold cone), this protein is Con-Ins Tx1.